We begin with the raw amino-acid sequence, 216 residues long: Ethylene-responsive transcription factor ERF016 (216 aa).

Positions 6–63 (KYTGVRKRKWGKWVAEIRLPNSRDRIWLGSFDSAEKAARAFDAALYCLRGPGARFNFP) form a DNA-binding region, AP2/ERF. The segment at 121-145 (EINSGSGGPTLGQVGEDNNNEGNSN) is disordered. Positions 135–145 (GEDNNNEGNSN) are enriched in low complexity.

Belongs to the AP2/ERF transcription factor family. ERF subfamily.

Its subcellular location is the nucleus. In terms of biological role, probably acts as a transcriptional activator. Binds to the GCC-box pathogenesis-related promoter element. May be involved in the regulation of gene expression by stress factors and by components of stress signal transduction pathways. The protein is Ethylene-responsive transcription factor ERF016 (ERF016) of Arabidopsis thaliana (Mouse-ear cress).